Reading from the N-terminus, the 161-residue chain is Lipid droplet assembly factor 1 (161 aa).

At 1 to 43 (MAEEEPSSVSRDLQELQRKLGLLLESFQNNSKVVAFMKSPVGR) the chain is on the cytoplasmic side. A helical membrane pass occupies residues 44-61 (FLDRHPFLVLTVLMFVTM). Topologically, residues 62 to 67 (SAIPVG) are lumenal. Residues 68–87 (FFLLIVVLTSLGALMGAILL) traverse the membrane as a helical segment. At 88 to 93 (EGLVIS) the chain is on the cytoplasmic side. A helical transmembrane segment spans residues 94 to 110 (VCGLSLLCILCGLGFVS). The Lumenal segment spans residues 111 to 116 (LALSGI). Residues 117–133 (TMMSYVVVSCLMSYWFS) form a helical membrane-spanning segment. The Cytoplasmic segment spans residues 134–161 (PSRPPTQQHANIDSQLAMKFTESEKLGL).

Belongs to the LDAF1 family. As to quaternary structure, interacts with BSCL2/seipin to form an oligomeric complex.

It localises to the endoplasmic reticulum membrane. The protein resides in the lipid droplet. Its function is as follows. Plays an important role in the formation of lipid droplets (LD) which are storage organelles at the center of lipid and energy homeostasis. In association with BSCL2/seipin, defines the sites of LD formation in the endoplasmic reticulum. This Rattus norvegicus (Rat) protein is Lipid droplet assembly factor 1.